The following is a 1205-amino-acid chain: Bromodomain and PHD finger-containing protein 3 (1205 aa).

2 disordered regions span residues 1–27 (MRKPRRKSRQNAEGRRSPSPYSLKCSP) and 75–121 (NSNK…SFRM). A Phosphoserine modification is found at serine 17. A compositionally biased stretch (polar residues) spans 75–84 (NSNKENSEQP). Basic residues predominate over residues 89-99 (KSKKPSSKGKK). The PHD-type 1 zinc finger occupies 212 to 262 (DAFCCVCLDDECHNSNVILFCDICNLAVHQECYGVPYIPEGQWLCRCCLQS). The C2HC pre-PHD-type zinc-finger motif lies at 266–299 (PVDCILCPNKGGAFKQTSDGHWAHVVCAIWIPEV). Residues 323–387 (LTCYICKQKG…RKTAYCEAHS (65 aa)) form a PHD-type 2 zinc finger. Residues 387–472 (SPPGAATARR…AGQDTPSTLP (86 aa)) form a disordered region. Residues serine 400 and serine 403 each carry the phosphoserine modification. Positions 417–432 (DGEEEEEEEVEEEEQE) are enriched in acidic residues. Residues 444–456 (VPKKSKMSLKQKI) show a composition bias toward basic residues. An N6-acetyllysine mark is found at lysine 447, lysine 449, and lysine 671. A Bromo domain is found at 589 to 693 (LELMPFNVLL…DLGGAILRHA (105 aa)). Serine 713 and serine 740 each carry phosphoserine. Positions 779 to 897 (RQKLAQPPPP…LQLGNEPLQR (119 aa)) are disordered. Residues 817-827 (LQEEPEDDGDR) are compositionally biased toward acidic residues. Positions 839–851 (EPTGPAPSLSEQE) are enriched in low complexity. At serine 900 the chain carries Phosphoserine. 2 disordered regions span residues 907-926 (LSLMAPDTPAGTPLSGVGRR) and 931-1015 (FKKA…SECS). Basic and acidic residues predominate over residues 942–955 (RSPDRVLENGEDHG). 2 positions are modified to phosphoserine: serine 962 and serine 965. A compositionally biased stretch (basic and acidic residues) spans 980–991 (SCSESEGERSPQ). In terms of domain architecture, PWWP spans 1076-1159 (PLELVWAKCR…RDKVLPLGVE (84 aa)).

As to quaternary structure, component of some HBO1 complex composed of KAT7/HBO1, MEAF6, ING4 or ING5, and BRPF3. Component of the MOZ/MORF complex composed at least of ING5, KAT6A, KAT6B, MEAF6 and one of BRPF1, BRD1/BRPF2 and BRPF3. Interacts with KAT7/HBO1; the interaction is direct.

It is found in the nucleus. In terms of biological role, scaffold subunit of various histone acetyltransferase (HAT) complexes, such as the MOZ/MORF and HBO1 complexes, which have a histone H3 acetyltransferase activity. Plays a role in DNA replication initiation by directing KAT7/HBO1 specificity towards histone H3 'Lys-14' acetylation (H3K14ac), thereby facilitating the activation of replication origins. Component of the MOZ/MORF complex which has a histone H3 acetyltransferase activity. The polypeptide is Bromodomain and PHD finger-containing protein 3 (Homo sapiens (Human)).